The primary structure comprises 236 residues: MATPHINAQVGDFAETVLMPGDPLRAKFIAENFLEDVTQVCDVRNMFGYTGTYKGKKVSVMGHGMGIPSCCIYVHELIAEFGVKNIIRVGSCGAVHDDVKLMDVVIGMGASTDSKVNRIRFNNHDFAAIADFGLLETAVAQARKLNVPVKVGNVFSADLFYSPETDLFDKMEKLGILGVDMEAAGIYRVAADLGAKALTILTVSDHIKRGEKLSSEDRQKSFNDMMTVALETAIKL.

H5 contacts a purine D-ribonucleoside. Phosphate contacts are provided by residues G21, R25, R44, and 88-91 (RVGS). A purine D-ribonucleoside contacts are provided by residues 180-182 (DME) and 204-205 (SD). Residue D205 is the Proton donor of the active site.

It belongs to the PNP/UDP phosphorylase family. In terms of assembly, homohexamer; trimer of homodimers.

It carries out the reaction a purine D-ribonucleoside + phosphate = a purine nucleobase + alpha-D-ribose 1-phosphate. The enzyme catalyses a purine 2'-deoxy-D-ribonucleoside + phosphate = a purine nucleobase + 2-deoxy-alpha-D-ribose 1-phosphate. Catalyzes the reversible phosphorolytic breakdown of the N-glycosidic bond in the beta-(deoxy)ribonucleoside molecules, with the formation of the corresponding free purine bases and pentose-1-phosphate. The chain is Purine nucleoside phosphorylase DeoD-type from Aliivibrio salmonicida (strain LFI1238) (Vibrio salmonicida (strain LFI1238)).